Here is an 84-residue protein sequence, read N- to C-terminus: uncharacterized protein (84 aa).

An HTH cro/C1-type domain is found at 7 to 62; it reads IDVMLAKRKMSVTELSERVGITMANLSILKNGKAKAIRLSTLEAICKALECQPGDI. Positions 18 to 37 form a DNA-binding region, H-T-H motif; that stretch reads VTELSERVGITMANLSILKN.

This is an uncharacterized protein from Bacillus subtilis (strain 168).